The chain runs to 300 residues: Cation-efflux pump FieF (300 aa).

Transmembrane regions (helical) follow at residues 12–32, 39–59, 82–102, and 114–134; these read AAIA…FAWW, ILAA…NLLV, AALA…LTGI, and PGVG…LVSF. Zn(2+) contacts are provided by D45 and D49. Residues H153 and D157 each coordinate Zn(2+). 2 consecutive transmembrane segments (helical) span residues 156-176 and 178-198; these read SDVM…YGWH and ADAL…LRMG.

Belongs to the cation diffusion facilitator (CDF) transporter (TC 2.A.4) family. FieF subfamily. In terms of assembly, homodimer.

The protein resides in the cell inner membrane. The catalysed reaction is Zn(2+)(in) + H(+)(out) = Zn(2+)(out) + H(+)(in). The enzyme catalyses Cd(2+)(in) + H(+)(out) = Cd(2+)(out) + H(+)(in). It catalyses the reaction Fe(2+)(in) + H(+)(out) = Fe(2+)(out) + H(+)(in). Its function is as follows. Divalent metal cation transporter which exports Zn(2+), Cd(2+) and possibly Fe(2+). May be involved in zinc and iron detoxification by efflux. The protein is Cation-efflux pump FieF of Escherichia coli O7:K1 (strain IAI39 / ExPEC).